A 583-amino-acid polypeptide reads, in one-letter code: Aspartate--tRNA ligase (583 aa).

E174 is an L-aspartate binding site. Residues Q198–K201 form an aspartate region. L-aspartate is bound at residue R220. Residues R220–E222 and Q229 contribute to the ATP site. H443 contributes to the L-aspartate binding site. E477 is an ATP binding site. R484 is a binding site for L-aspartate. Position 529 to 532 (G529 to R532) interacts with ATP.

This sequence belongs to the class-II aminoacyl-tRNA synthetase family. Type 1 subfamily. In terms of assembly, homodimer.

Its subcellular location is the cytoplasm. It catalyses the reaction tRNA(Asp) + L-aspartate + ATP = L-aspartyl-tRNA(Asp) + AMP + diphosphate. Its function is as follows. Catalyzes the attachment of L-aspartate to tRNA(Asp) in a two-step reaction: L-aspartate is first activated by ATP to form Asp-AMP and then transferred to the acceptor end of tRNA(Asp). In Streptococcus agalactiae serotype V (strain ATCC BAA-611 / 2603 V/R), this protein is Aspartate--tRNA ligase.